Reading from the N-terminus, the 433-residue chain is Glutamate-1-semialdehyde 2,1-aminomutase (433 aa).

The residue at position 270 (Lys-270) is an N6-(pyridoxal phosphate)lysine.

The protein belongs to the class-III pyridoxal-phosphate-dependent aminotransferase family. HemL subfamily. In terms of assembly, homodimer. Requires pyridoxal 5'-phosphate as cofactor.

The protein resides in the cytoplasm. It catalyses the reaction (S)-4-amino-5-oxopentanoate = 5-aminolevulinate. It participates in porphyrin-containing compound metabolism; protoporphyrin-IX biosynthesis; 5-aminolevulinate from L-glutamyl-tRNA(Glu): step 2/2. This chain is Glutamate-1-semialdehyde 2,1-aminomutase, found in Clostridium novyi (strain NT).